The sequence spans 175 residues: Methylmalonyl-CoA epimerase, mitochondrial (175 aa).

The transit peptide at M1–H35 directs the protein to the mitochondrion. The VOC domain occupies R46–A175. H49 is a binding site for Co(2+). K113 is modified (N6-succinyllysine). H121 contacts Co(2+). Residue K149 is modified to N6-acetyllysine; alternate. K149 is modified (N6-succinyllysine; alternate). E171 serves as a coordination point for Co(2+).

Belongs to the methylmalonyl-CoA epimerase family.

It is found in the mitochondrion. It catalyses the reaction (R)-methylmalonyl-CoA = (S)-methylmalonyl-CoA. Functionally, methylmalonyl-CoA epimerase involved in propionyl-CoA metabolism. In Bos taurus (Bovine), this protein is Methylmalonyl-CoA epimerase, mitochondrial (MCEE).